The sequence spans 137 residues: Large ribosomal subunit protein uL14A (137 aa).

Ser-2 is modified (N-acetylserine). An N6,N6-dimethyllysine; by RKM1 mark is found at Lys-106 and Lys-110.

This sequence belongs to the universal ribosomal protein uL14 family. As to quaternary structure, component of the large ribosomal subunit (LSU). Mature yeast ribosomes consist of a small (40S) and a large (60S) subunit. The 40S small subunit contains 1 molecule of ribosomal RNA (18S rRNA) and 33 different proteins (encoded by 57 genes). The large 60S subunit contains 3 rRNA molecules (25S, 5.8S and 5S rRNA) and 46 different proteins (encoded by 81 genes). Methylated by RKM1 at 2 different sites, but it is unclear which are the 2 methylated residues among Lys-40, Lys-106 and/or Lys-110.

The protein localises to the cytoplasm. Component of the ribosome, a large ribonucleoprotein complex responsible for the synthesis of proteins in the cell. The small ribosomal subunit (SSU) binds messenger RNAs (mRNAs) and translates the encoded message by selecting cognate aminoacyl-transfer RNA (tRNA) molecules. The large subunit (LSU) contains the ribosomal catalytic site termed the peptidyl transferase center (PTC), which catalyzes the formation of peptide bonds, thereby polymerizing the amino acids delivered by tRNAs into a polypeptide chain. The nascent polypeptides leave the ribosome through a tunnel in the LSU and interact with protein factors that function in enzymatic processing, targeting, and the membrane insertion of nascent chains at the exit of the ribosomal tunnel. This is Large ribosomal subunit protein uL14A from Saccharomyces cerevisiae (strain ATCC 204508 / S288c) (Baker's yeast).